Here is a 360-residue protein sequence, read N- to C-terminus: Probable butyrate kinase (360 aa).

This sequence belongs to the acetokinase family.

It is found in the cytoplasm. The enzyme catalyses butanoate + ATP = butanoyl phosphate + ADP. The protein is Probable butyrate kinase of Enterococcus faecalis (strain ATCC 700802 / V583).